Consider the following 331-residue polypeptide: DNA-directed RNA polymerase subunit alpha (331 aa).

Residues 1–230 (MKNIKTSPYI…KQMSVFNSEW (230 aa)) form an alpha N-terminal domain (alpha-NTD) region. The alpha C-terminal domain (alpha-CTD) stretch occupies residues 247-331 (LKPLLQKIEA…ALQKRLNKLK (85 aa)).

This sequence belongs to the RNA polymerase alpha chain family. Homodimer. The RNAP catalytic core consists of 2 alpha, 1 beta/beta' and 1 omega subunit. When a sigma factor is associated with the core the holoenzyme is formed, which can initiate transcription.

The enzyme catalyses RNA(n) + a ribonucleoside 5'-triphosphate = RNA(n+1) + diphosphate. Its function is as follows. DNA-dependent RNA polymerase catalyzes the transcription of DNA into RNA using the four ribonucleoside triphosphates as substrates. The polypeptide is DNA-directed RNA polymerase subunit alpha (Wolinella succinogenes (strain ATCC 29543 / DSM 1740 / CCUG 13145 / JCM 31913 / LMG 7466 / NCTC 11488 / FDC 602W) (Vibrio succinogenes)).